The sequence spans 647 residues: DNA polymerase subunit gamma-1 (647 aa).

The disordered stretch occupies residues 116–147 (ERPGRAEQSQMQDEDGLPELVEESSQPSFHHG). The span at 127–137 (QDEDGLPELVE) shows a compositional bias: acidic residues.

This sequence belongs to the DNA polymerase type-A family. As to quaternary structure, heterotrimer composed of a catalytic subunit and a homodimer of accessory subunits. Interacts with TTC3. The cofactor is Mg(2+).

It localises to the mitochondrion. It is found in the mitochondrion matrix. The protein resides in the mitochondrion nucleoid. It catalyses the reaction DNA(n) + a 2'-deoxyribonucleoside 5'-triphosphate = DNA(n+1) + diphosphate. Involved in the replication of mitochondrial DNA. Associates with mitochondrial DNA. The polypeptide is DNA polymerase subunit gamma-1 (POLG) (Gallus gallus (Chicken)).